The sequence spans 97 residues: Sperm-associated acrosin inhibitor (97 aa).

The first 26 residues, 1-26 (MAFFSSRVRALFILVLVLPLCSETGF), serve as a signal peptide directing secretion. In terms of domain architecture, Kazal-like spans 32–90 (TRKEPDCDVYRSHLFFCTREMDPICGTNGKSYANPCIFCSEKLGRNEKFDFGHWGHCRE). 3 disulfides stabilise this stretch: Cys38-Cys70, Cys48-Cys67, and Cys56-Cys88.

Seminal plasma.

Its subcellular location is the secreted. Its function is as follows. Inhibits acrosin. This chain is Sperm-associated acrosin inhibitor, found in Sus scrofa (Pig).